The sequence spans 421 residues: Exopolysaccharide production protein ExoF (421 aa).

A signal peptide spans 1-31 (MQSNRRSGKSAGSRMVSCFTRLALLAALAAS).

The protein localises to the periplasm. The protein operates within glycan metabolism; exopolysaccharide biosynthesis. Involved in succinoglycan (EPS I) synthesis. Needed for the addition of the first sugar (galactose) to the isoprenoid carrier. This chain is Exopolysaccharide production protein ExoF (exoF), found in Rhizobium meliloti (strain 1021) (Ensifer meliloti).